A 687-amino-acid polypeptide reads, in one-letter code: Ribosomal RNA processing protein 1 homolog (687 aa).

The span at 288–298 shows a compositional bias: acidic residues; it reads DEEDDEVNAEE. 2 disordered regions span residues 288–312 and 463–624; these read DEED…RAGN and VKEA…GSGK. 3 stretches are compositionally biased toward basic and acidic residues: residues 463–488, 497–520, and 527–543; these read VKEA…DQTK, PKND…EEPA, and HSKT…DEQP. The span at 554–564 shows a compositional bias: low complexity; that stretch reads KAKPTPKTKAA. Polar residues predominate over residues 596–608; sequence KQANSKLPQSTPK. Residues Thr617 and Thr620 each carry the phosphothreonine modification. At Ser622 the chain carries Phosphoserine.

Belongs to the RRP1 family.

It is found in the nucleus. May be involved in the generation of 28S rRNA. This is Ribosomal RNA processing protein 1 homolog (Nnp-1) from Drosophila melanogaster (Fruit fly).